We begin with the raw amino-acid sequence, 436 residues long: 3-ketoacyl-CoA thiolase (436 aa).

Residue Cys99 is the Acyl-thioester intermediate of the active site. Residues His392 and Cys422 each act as proton acceptor in the active site.

It belongs to the thiolase-like superfamily. Thiolase family. As to quaternary structure, heterotetramer of two alpha chains (FadJ) and two beta chains (FadI).

The protein resides in the cytoplasm. It catalyses the reaction an acyl-CoA + acetyl-CoA = a 3-oxoacyl-CoA + CoA. It functions in the pathway lipid metabolism; fatty acid beta-oxidation. Its function is as follows. Catalyzes the final step of fatty acid oxidation in which acetyl-CoA is released and the CoA ester of a fatty acid two carbons shorter is formed. In Shewanella halifaxensis (strain HAW-EB4), this protein is 3-ketoacyl-CoA thiolase.